Here is a 656-residue protein sequence, read N- to C-terminus: Methylenetetrahydrofolate reductase (NADPH) (656 aa).

Positions 1-12 are enriched in polar residues; that stretch reads MVNEARGNSSLN. Residues 1–44 form a disordered region; it reads MVNEARGNSSLNPCLEGSASSGSESSKDSSRCSTPGLDPERHER. Ser9, Ser10, Ser18, Ser20, Ser21, Ser23, Ser25, Ser26, Ser29, and Ser30 each carry phosphoserine. At Thr34 the chain carries Phosphothreonine. Residue Glu63 is the Proton donor/acceptor of the active site. Position 63–68 (63–68) interacts with NAD(+); it reads EFFPPR. Position 90 is a phosphotyrosine (Tyr90). Residue Thr94 is modified to Phosphothreonine. 94 to 95 is a binding site for NAD(+); sequence TW. 94–95 serves as a coordination point for FAD; it reads TW. Ser103 carries the post-translational modification Phosphoserine. Residues His127, 157-159, 174-175, Tyr197, 201-204, Asp210, and Lys217 each bind FAD; these read RGD, YA, and HPEA. Asp159 is a binding site for substrate. Substrate contacts are provided by Gln228, Tyr321, and Arg325. Ser394 is subject to Phosphoserine. Thr451 carries the phosphothreonine modification. S-adenosyl-L-methionine contacts are provided by residues Asn456, 461 to 464, 481 to 485, Thr560, and Thr573; these read AAET and TINSQ.

Belongs to the methylenetetrahydrofolate reductase family. As to quaternary structure, homodimer. The cofactor is FAD. Phosphorylation of an N-terminal serine-rich phosphorylation region increases sensitivity to S-adenosylmethionine and inhibition.

The catalysed reaction is (6S)-5-methyl-5,6,7,8-tetrahydrofolate + NADP(+) = (6R)-5,10-methylene-5,6,7,8-tetrahydrofolate + NADPH + H(+). Its pathway is one-carbon metabolism; tetrahydrofolate interconversion. Allosterically regulated by S-adenosylmethionine (SAM). Catalyzes the conversion of 5,10-methylenetetrahydrofolate to 5-methyltetrahydrofolate, a cosubstrate for homocysteine remethylation to methionine. Represents a key regulatory connection between the folate and methionine cycles. The chain is Methylenetetrahydrofolate reductase (NADPH) from Homo sapiens (Human).